Here is a 156-residue protein sequence, read N- to C-terminus: Ribosomal RNA large subunit methyltransferase H (156 aa).

Residues Leu-74, Gly-105, and 124-129 (LSKLTL) each bind S-adenosyl-L-methionine.

This sequence belongs to the RNA methyltransferase RlmH family. In terms of assembly, homodimer.

It is found in the cytoplasm. The enzyme catalyses pseudouridine(1915) in 23S rRNA + S-adenosyl-L-methionine = N(3)-methylpseudouridine(1915) in 23S rRNA + S-adenosyl-L-homocysteine + H(+). Functionally, specifically methylates the pseudouridine at position 1915 (m3Psi1915) in 23S rRNA. The chain is Ribosomal RNA large subunit methyltransferase H from Legionella pneumophila (strain Paris).